Consider the following 280-residue polypeptide: Thioredoxin-related transmembrane protein 1 (280 aa).

An N-terminal signal peptide occupies residues 1–26; sequence MAPSGSLAVPLAVLVLLLWGAPWTHG. In terms of domain architecture, Thioredoxin spans 27 to 132; that stretch reads RRSNVRVITD…FINFISDKEW (106 aa). Residues 27–180 lie on the Extracellular side of the membrane; that stretch reads RRSNVRVITD…EDLGLPVWGS (154 aa). Catalysis depends on nucleophile residues Cys56 and Cys59. Cys56 and Cys59 are disulfide-bonded. The chain crosses the membrane as a helical span at residues 181–203; that stretch reads YTVFALATLFSGLLLGLCMIFVA. The Cytoplasmic portion of the chain corresponds to 204–280; sequence DCLCPSKRRR…LGPSLATDKS (77 aa). Residues Cys205 and Cys207 are each lipidated (S-palmitoyl cysteine). The tract at residues 218-280 is disordered; it reads PYPSKKLLSE…LGPSLATDKS (63 aa). Phosphoserine is present on residues Ser228, Ser247, Ser270, Ser274, and Ser280. Positions 237 to 252 are enriched in acidic residues; sequence EEQEADEEDVSEEEAE.

Interacts with ATP2A2. Palmitoylated; palmitoylation is required for localization to mitochondria-associated endoplasmic reticulum membrane (MAM). In terms of tissue distribution, ubiquitous. Highly expressed in kidney, liver, placenta and lung.

The protein resides in the endoplasmic reticulum membrane. The protein localises to the mitochondrion membrane. It localises to the secreted. The enzyme catalyses Catalyzes the rearrangement of -S-S- bonds in proteins.. Thiredoxin domain-containing protein that participates in various redox reactions through the reversible oxidation of its active center dithiol to a disulfide and catalyze dithiol-disulfide exchange reactions. Acts as a key inhibitor of the alternative triglyceride biosynthesis pathway by inhibiting the activity of TMEM68/DIESL at the endoplasmic reticulum, thereby restricting accumulation of triacylglycerol. The alternative triglyceride biosynthesis pathway mediates formation of triacylglycerol from diacylglycerol and membrane phospholipids. Acts as a protein disulfide isomerase by catalyzing formation or reduction of disulfide bonds. Specifically mediates formation of disulfide bonds of transmembrane proteins at the endoplasmic reticulum membrane. Involved in endoplasmic reticulum-associated degradation (ERAD) via its protein disulfide isomerase activity by acting on folding-defective polypeptides at the endoplasmic reticulum membrane. Acts as a negative regulator of platelet aggregation following secretion in the extracellular space. Acts as a regulator of endoplasmic reticulum-mitochondria contact sites via its ability to regulate redox signals. Regulates endoplasmic reticulum-mitochondria Ca(2+) flux. This chain is Thioredoxin-related transmembrane protein 1, found in Homo sapiens (Human).